A 985-amino-acid polypeptide reads, in one-letter code: Alanine--tRNA ligase, mitochondrial (985 aa).

A mitochondrion-targeting transit peptide spans Met1 to Gln23. Residues Arg105, His123, Trp205, and Leu235–Asn237 each bind ATP. L-alanine is bound by residues Asn237 and Asp260. Gly264 contacts ATP. Zn(2+)-binding residues include His632, His636, Cys749, and His753.

Belongs to the class-II aminoacyl-tRNA synthetase family. As to quaternary structure, monomer. Requires Zn(2+) as cofactor.

Its subcellular location is the mitochondrion. It carries out the reaction tRNA(Ala) + L-alanine + ATP = L-alanyl-tRNA(Ala) + AMP + diphosphate. The enzyme catalyses (S)-lactate + ATP + H(+) = (S)-lactoyl-AMP + diphosphate. It catalyses the reaction (S)-lactoyl-AMP + L-lysyl-[protein] = N(6)-[(S)-lactoyl]-L-lysyl-[protein] + AMP + 2 H(+). In terms of biological role, catalyzes the attachment of alanine to tRNA(Ala) in a two-step reaction: alanine is first activated by ATP to form Ala-AMP and then transferred to the acceptor end of tRNA(Ala). Also edits incorrectly charged tRNA(Ala) via its editing domain. In presence of high levels of lactate, also acts as a protein lactyltransferase that mediates lactylation of lysine residues in target proteins, such as CGAS. Acts as an inhibitor of cGAS/STING signaling by catalyzing lactylation of CGAS, preventing the formation of liquid-like droplets in which CGAS is activated. In Rattus norvegicus (Rat), this protein is Alanine--tRNA ligase, mitochondrial (Aars2).